The following is a 347-amino-acid chain: Lipopolysaccharide core heptosyltransferase OpsX (347 aa).

Belongs to the glycosyltransferase 9 family.

The protein operates within bacterial outer membrane biogenesis; LPS core biosynthesis. Its function is as follows. Catalyzes heptose transfer to the lipopolysaccharide core. It transfers the first L-glycero-D-manno-heptose to the phosphorylated 3-deoxy-alpha-D-manno-octulosonic acid (Kdo-P) of the inner core. This is Lipopolysaccharide core heptosyltransferase OpsX from Haemophilus influenzae (strain ATCC 51907 / DSM 11121 / KW20 / Rd).